Reading from the N-terminus, the 350-residue chain is Probable 2-dehydropantoate 2-reductase (350 aa).

Residues 9-14 (GAGSIG) and N115 contribute to the NADP(+) site. N115 contributes to the substrate binding site. The active-site Proton donor is the K213. N217, N221, and S295 together coordinate substrate. Position 307 (E307) interacts with NADP(+).

Belongs to the ketopantoate reductase family.

It carries out the reaction (R)-pantoate + NADP(+) = 2-dehydropantoate + NADPH + H(+). The protein operates within cofactor biosynthesis; (R)-pantothenate biosynthesis; (R)-pantoate from 3-methyl-2-oxobutanoate: step 2/2. Functionally, catalyzes the NADPH-dependent reduction of ketopantoate into pantoic acid. The sequence is that of Probable 2-dehydropantoate 2-reductase from Schizosaccharomyces pombe (strain 972 / ATCC 24843) (Fission yeast).